Consider the following 473-residue polypeptide: Flavin-dependent L-tryptophan oxidase RebO (473 aa).

An N-terminal signal peptide occupies residues 1 to 21 (MSRGHKKITVLGAGVAGLVAA). FAD is bound by residues 15–16 (VA), 35–36 (EG), Arg43, 61–64 (GAMR), Glu444, and 451–456 (AWIDGA).

It belongs to the flavin monoamine oxidase family. RebO subfamily. Homodimer. FAD serves as cofactor.

It carries out the reaction 7-chloro-L-tryptophan + O2 = 3-(7-chloroindol-3-yl)-2-iminopropanoate + H2O2. It catalyses the reaction L-tryptophan + O2 = 2-iminio-3-(indol-3-yl)propanoate + H2O2. Functionally, involved in the biosynthesis of the indolocarbazole antitumor agent rebeccamycin. It generates the imine form of 7-chloroindole 3-pyruvate (7Cl-IPA) from 7-chloro-L-tryptophan (7Cl-Trp), with concomitant two-electron reduction of O(2) to H(2)O(2). The enzyme is also active with L-tryptophan as substrate. This chain is Flavin-dependent L-tryptophan oxidase RebO (rebO), found in Lentzea aerocolonigenes (Lechevalieria aerocolonigenes).